The chain runs to 138 residues: Putative pre-16S rRNA nuclease (138 aa).

It belongs to the YqgF nuclease family.

The protein localises to the cytoplasm. Its function is as follows. Could be a nuclease involved in processing of the 5'-end of pre-16S rRNA. This Mycoplasma genitalium (strain ATCC 33530 / DSM 19775 / NCTC 10195 / G37) (Mycoplasmoides genitalium) protein is Putative pre-16S rRNA nuclease.